The following is a 259-amino-acid chain: MSTPIIVMGAGGRMGSTICRLVQEEPQLCLAAVLERPDRASGVARDGCIAGSDPDVVFPQVPGGVIIDFTAPEASMATARAAARHGNAVVIGTTGFNEEQKAELAELARQIRLFWAPNMSVGVNVLLKVLPELVRLLGEKYDLEMVELHHNRKKDSPSGTALRLAECLAEARDWNLPDVACYHREGIIGERPQKEIGVQTIRGGDVVGVHTVYCLGPGERIEVTHQAHSRETFAQGALRAAAWLATQKPGKLYNMADIF.

NAD(+) contacts are provided by residues G9 to M14 and E35. R36 contacts NADP(+). Residues G92–T94 and A116–M119 contribute to the NAD(+) site. H149 (proton donor/acceptor) is an active-site residue. H150 contacts (S)-2,3,4,5-tetrahydrodipicolinate. The Proton donor role is filled by K153. Residue G159–T160 coordinates (S)-2,3,4,5-tetrahydrodipicolinate.

Belongs to the DapB family.

It localises to the cytoplasm. It carries out the reaction (S)-2,3,4,5-tetrahydrodipicolinate + NAD(+) + H2O = (2S,4S)-4-hydroxy-2,3,4,5-tetrahydrodipicolinate + NADH + H(+). The enzyme catalyses (S)-2,3,4,5-tetrahydrodipicolinate + NADP(+) + H2O = (2S,4S)-4-hydroxy-2,3,4,5-tetrahydrodipicolinate + NADPH + H(+). It participates in amino-acid biosynthesis; L-lysine biosynthesis via DAP pathway; (S)-tetrahydrodipicolinate from L-aspartate: step 4/4. Its function is as follows. Catalyzes the conversion of 4-hydroxy-tetrahydrodipicolinate (HTPA) to tetrahydrodipicolinate. This Nitratidesulfovibrio vulgaris (strain DP4) (Desulfovibrio vulgaris) protein is 4-hydroxy-tetrahydrodipicolinate reductase.